A 313-amino-acid polypeptide reads, in one-letter code: Mas-related G-protein coupled receptor member A4 (313 aa).

At 1 to 25 (MAPTTTNPMNETIPGSIDIETLIPN) the chain is on the extracellular side. The N-linked (GlcNAc...) asparagine glycan is linked to N10. Residues 26–46 (LMIIIFGLVGLTGNVILFWLL) form a helical membrane-spanning segment. Topologically, residues 47–54 (GFHLHRNA) are cytoplasmic. Residues 55–75 (FLVYILNLALADFLFLLCHII) form a helical membrane-spanning segment. N76 is a glycosylation site (N-linked (GlcNAc...) asparagine). Over 76–93 (NSTMLLLKVHLPNNILNH) the chain is Extracellular. Residues 94–114 (CFDIIMTVLYITGLSMLSAIS) traverse the membrane as a helical segment. Over 115-137 (TERCLSVLCPIWYRCRRPEHTST) the chain is Cytoplasmic. A helical transmembrane segment spans residues 138–158 (VLCAVIWFLPLLICILNGYFC). Residues 159 to 182 (HFFGPKYVIDSVCLATNFFIRTYP) are Extracellular-facing. The chain crosses the membrane as a helical span at residues 183-203 (MFLFIVLCLSTLALLARLFCG). Topologically, residues 204 to 219 (AGKTKFTRLFVTIMLT) are cytoplasmic. A helical transmembrane segment spans residues 220 to 240 (VLVFLLCGLPLGFFWFLVPWI). Over 241-255 (NRDFSVLDYILFQTS) the chain is Extracellular. Residues 256–276 (LVLTSVNSCANPIIYFFVGSF) traverse the membrane as a helical segment. At 277-313 (RHRLKHKTLKMVLQSALQDTPETPENMVEMSRSKAEP) the chain is on the cytoplasmic side.

This sequence belongs to the G-protein coupled receptor 1 family. Mas subfamily. As to expression, expressed in a subset of sensory neurons that includes nociceptors. Expressed in the subclass of non-peptidergic sensory neurons that are IB4(+) and VR1(-).

Its subcellular location is the cell membrane. Functionally, orphan receptor. May be a receptor for RFamide-family neuropeptides such as NPFF and NPAF, which are analgesic in vivo. May regulate nociceptor function and/or development, including the sensation or modulation of pain. In Mus musculus (Mouse), this protein is Mas-related G-protein coupled receptor member A4 (Mrgpra4).